We begin with the raw amino-acid sequence, 468 residues long: Hexokinase (468 aa).

Residues 10 to 466 (AKQLAELEVV…SGKGAALIAD (457 aa)) enclose the Hexokinase domain. Residues 74-225 (TGAEVGEAYA…NVPAVCKAIV (152 aa)) are hexokinase small subdomain. 85–90 (DFGGST) serves as a coordination point for ATP. The tract at residues 163–189 (PVGFTFSFPCAQAALNSSFLIEWTKGF) is glucose-binding. The interval 226–455 (NDTVGTLVSC…KNIHYCIADD (230 aa)) is hexokinase large subdomain.

Belongs to the hexokinase family.

It catalyses the reaction a D-hexose + ATP = a D-hexose 6-phosphate + ADP + H(+). The catalysed reaction is D-mannose + ATP = D-mannose 6-phosphate + ADP + H(+). It carries out the reaction D-fructose + ATP = D-fructose 6-phosphate + ADP + H(+). The enzyme catalyses D-glucose + ATP = D-glucose 6-phosphate + ADP + H(+). The protein operates within carbohydrate metabolism; hexose metabolism. Its pathway is carbohydrate degradation; glycolysis; D-glyceraldehyde 3-phosphate and glycerone phosphate from D-glucose: step 1/4. Its function is as follows. Catalyzes the phosphorylation of various hexoses to hexose 6-phosphate. The chain is Hexokinase (HXK) from Toxoplasma gondii.